We begin with the raw amino-acid sequence, 858 residues long: Volume-regulated anion channel subunit LRRC8D (858 aa).

The Cytoplasmic segment spans residues 1-22; it reads MFTLAEVASLNDIQPTYRILKP. A helical transmembrane segment spans residues 23-48; it reads WWDVFMDYLAVVMLMVAIFAGTMQLT. Topologically, residues 49-163 are extracellular; it reads KDQVVCLPVL…YHLALPWYSK (115 aa). C54 and C354 are disulfide-bonded. A disordered region spans residues 118–137; it reads AESTFPSQETKKEKRDPTGR. Residues 126–137 show a composition bias toward basic and acidic residues; it reads ETKKEKRDPTGR. A helical transmembrane segment spans residues 164 to 182; it reads YFPYLALIHTIILMVSSNF. At 183–308 the chain is on the cytoplasmic side; it reads WFKYPKTCSK…EDSDLIYKLY (126 aa). The tract at residues 221–251 is disordered; that stretch reads SEENKQRITGAQTLPKHVSTSSDEGSPSAST. The span at 227 to 251 shows a compositional bias: polar residues; that stretch reads RITGAQTLPKHVSTSSDEGSPSAST. S241, S242, and S246 each carry phosphoserine. A helical transmembrane segment spans residues 309–330; that stretch reads VVQTLIKTAKFIFILCYTANFV. Over 331 to 360 the chain is Extracellular; the sequence is NAISFEHVCKPKVEHLTGYEVFECTHNMAY. A helical transmembrane segment spans residues 361-386; that stretch reads MLKKLLISYISIICVYGFICLYTLFW. Residues 387–858 are Cytoplasmic-facing; sequence LFRIPLKEYS…DVNVPFANGI (472 aa). LRR repeat units lie at residues 514–534, 538–559, 561–582, 589–609, 612–632, 636–657, 659–680, 684–705, 707–728, 730–751, 753–774, 776–797, and 799–820; these read NLQELHLCHCPAKVEQTAFSF, HLRCLHVKFTDVAEIPAWVYLL, NLRELYLIGNLNSENNKMIGLE, HLKILHVKSNLTKVPSNITDV, HLTKLVIHNDGTKLLVLNSLK, NVAELELQNCELERIPHAIFSL, NLQELDLKSNSIRTIEEIISFQ, RLTCLKLWHNKIVAIPPSITHV, NLESLYFSNNKLESLPVAVFSL, KLRCLDVSYNNISTIPIEIGLL, NLQHLHITGNKVDVLPKQLFKC, KLRTLNLGQNCIASLPEKISQL, and QLTQLELKGNCLDRLPAQLGQC.

It belongs to the LRRC8 family. Heterohexamer; oligomerizes with other LRRC8 proteins (LRRC8A, LRRC8B, LRRC8C and/or LRRC8E) to form a heterohexamer. In vivo, the subunit composition may depend primarily on expression levels, and heterooligomeric channels containing various proportions of the different LRRC8 proteins may coexist.

The protein localises to the cell membrane. It localises to the endoplasmic reticulum membrane. It carries out the reaction chloride(in) = chloride(out). It catalyses the reaction iodide(out) = iodide(in). The catalysed reaction is taurine(out) = taurine(in). In terms of biological role, non-essential component of the volume-regulated anion channel (VRAC, also named VSOAC channel), an anion channel required to maintain a constant cell volume in response to extracellular or intracellular osmotic changes. The VRAC channel conducts iodide better than chloride and can also conduct organic osmolytes like taurine. Plays a redundant role in the efflux of amino acids, such as aspartate, in response to osmotic stress. Channel activity requires LRRC8A plus at least one other family member (LRRC8B, LRRC8C, LRRC8D or LRRC8E); channel characteristics depend on the precise subunit composition. Also acts as a regulator of glucose-sensing in pancreatic beta cells: VRAC currents, generated in response to hypotonicity- or glucose-induced beta cell swelling, depolarize cells, thereby causing electrical excitation, leading to increase glucose sensitivity and insulin secretion. VRAC channels containing LRRC8D inhibit transport of immunoreactive cyclic dinucleotide GMP-AMP (2'-3'-cGAMP), an immune messenger produced in response to DNA virus in the cytosol. The polypeptide is Volume-regulated anion channel subunit LRRC8D (Rattus norvegicus (Rat)).